Consider the following 359-residue polypeptide: Type-1 angiotensin II receptor (359 aa).

Residues 1 to 25 (MILNSSTEDGIKRIQDDCPKAGRHN) lie on the Extracellular side of the membrane. Residue Asn4 is glycosylated (N-linked (GlcNAc...) asparagine). Positions 15 and 17 each coordinate angiotensin II. 2 disulfides stabilise this stretch: Cys18–Cys274 and Cys101–Cys180. The chain crosses the membrane as a helical span at residues 26–55 (YIFIMIPTLYSIIFVVGIFGNSLVVIVIYF). Residues 56-61 (YMKLKT) lie on the Cytoplasmic side of the membrane. Residues 62–89 (VASVFLLNLALADLCFLLTLPLWAVYTA) traverse the membrane as a helical segment. Over 90–98 (MEYRWPFGN) the chain is Extracellular. A helical transmembrane segment spans residues 99–125 (YLCKIASASVSFNLYASVFLLTCLSID). Topologically, residues 126-141 (RYLAIVHPMKSRLRRT) are cytoplasmic. A helical transmembrane segment spans residues 142–165 (MLVAKVTCIIIWLLAGLASLPTII). At 166–190 (HRNVFFIENTNITVCAFHYESQNST) the chain is on the extracellular side. Arg167 contributes to the angiotensin II binding site. Asn176 carries N-linked (GlcNAc...) asparagine glycosylation. Angiotensin II-binding residues include Phe182, His183, and Tyr184. A glycan (N-linked (GlcNAc...) asparagine) is linked at Asn188. Residues 191–216 (LPVGLGLTKNILGFLFPFLIILTSYT) form a helical membrane-spanning segment. Lys199 lines the angiotensin II pocket. The Cytoplasmic portion of the chain corresponds to 217–239 (LIWKTLKKAYEIQKNKPRKDDIF). The chain crosses the membrane as a helical span at residues 240–268 (KIILAIVLFFFFSWVPHQIFTFMDVLIQL). At 269–278 (GLIRDCKIED) the chain is on the extracellular side. A helical transmembrane segment spans residues 279 to 304 (IVDTAMPITICLAYFNNCLNPLFYGF). Topologically, residues 305-359 (LGKKFKKYFLQLLKYIPPKAKSHSNLSTKMSTLSYRPSENGNSSTKKPAPCIEVE) are cytoplasmic. Over residues 336-350 (TLSYRPSENGNSSTK) the composition is skewed to polar residues. Residues 336–359 (TLSYRPSENGNSSTKKPAPCIEVE) are disordered. Residue Cys355 is the site of S-palmitoyl cysteine attachment.

Belongs to the G-protein coupled receptor 1 family. As to quaternary structure, interacts with MAS1. Interacts with ARRB1. Interacts with FLNA (via filamin repeat 21); increases PKA-mediated phosphorylation of FLNA. In terms of processing, C-terminal Ser or Thr residues may be phosphorylated. As to expression, adrenal medulla, cortex and kidney.

The protein localises to the cell membrane. Receptor for angiotensin II, a vasoconstricting peptide, which acts as a key regulator of blood pressure and sodium retention by the kidney. The activated receptor in turn couples to G-alpha proteins G(q) (GNAQ, GNA11, GNA14 or GNA15) and thus activates phospholipase C and increases the cytosolic Ca(2+) concentrations, which in turn triggers cellular responses such as stimulation of protein kinase C. The protein is Type-1 angiotensin II receptor (AGTR1) of Bos taurus (Bovine).